A 1030-amino-acid polypeptide reads, in one-letter code: uncharacterized protein (1030 aa).

Over residues 1–15 the composition is skewed to polar residues; that stretch reads MSENSTDSKNFQFSE. Positions 1 to 53 are disordered; that stretch reads MSENSTDSKNFQFSEGSRESSNDELKVLLRDTETKEDEKSSFSNSEEESIIEN. Residues 16-40 are compositionally biased toward basic and acidic residues; that stretch reads GSRESSNDELKVLLRDTETKEDEKS. Ser-41 is subject to Phosphoserine. One can recognise a Helicase ATP-binding domain in the interval 134 to 290; sequence IKCVERMESV…WISEIHKQPC (157 aa). Position 147 to 154 (147 to 154) interacts with ATP; that stretch reads AHTSAGKT. A DEVH box motif is present at residues 238–241; the sequence is DEVH. Residues 357 to 561 enclose the Helicase C-terminal domain; that stretch reads SLERIINMVL…GMILNLMRIE (205 aa).

The protein belongs to the helicase family. SKI2 subfamily.

It localises to the nucleus. This is an uncharacterized protein from Schizosaccharomyces pombe (strain 972 / ATCC 24843) (Fission yeast).